The primary structure comprises 97 residues: Conotoxin Cal6.1b (97 aa).

The signal sequence occupies residues 1 to 22 (MKLTTVLVVALLVLAACQFTVT). The interval 22–46 (TDNSGDDPENPSLRSAGENQNPDST) is disordered. Residues 23–68 (DNSGDDPENPSLRSAGENQNPDSTKTITAWATRDMTNMRRGLNRPS) constitute a propeptide that is removed on maturation. 3 disulfide bridges follow: Cys-71-Cys-87, Cys-78-Cys-91, and Cys-86-Cys-96.

It belongs to the conotoxin O1 superfamily. Expressed by the venom duct.

It localises to the secreted. In terms of biological role, probable neurotoxin with unknown target. Possibly targets ion channels. This is Conotoxin Cal6.1b from Californiconus californicus (California cone).